Consider the following 244-residue polypeptide: tRNA (guanine-N(1)-)-methyltransferase (244 aa).

Residues Gly-110 and 129–134 (IGDYIL) each bind S-adenosyl-L-methionine.

The protein belongs to the RNA methyltransferase TrmD family. As to quaternary structure, homodimer.

The protein resides in the cytoplasm. It carries out the reaction guanosine(37) in tRNA + S-adenosyl-L-methionine = N(1)-methylguanosine(37) in tRNA + S-adenosyl-L-homocysteine + H(+). Functionally, specifically methylates guanosine-37 in various tRNAs. This chain is tRNA (guanine-N(1)-)-methyltransferase, found in Syntrophomonas wolfei subsp. wolfei (strain DSM 2245B / Goettingen).